The following is a 393-amino-acid chain: Lipid-A-disaccharide synthase (393 aa).

It belongs to the LpxB family.

The catalysed reaction is a lipid X + a UDP-2-N,3-O-bis[(3R)-3-hydroxyacyl]-alpha-D-glucosamine = a lipid A disaccharide + UDP + H(+). Its pathway is bacterial outer membrane biogenesis; LPS lipid A biosynthesis. Condensation of UDP-2,3-diacylglucosamine and 2,3-diacylglucosamine-1-phosphate to form lipid A disaccharide, a precursor of lipid A, a phosphorylated glycolipid that anchors the lipopolysaccharide to the outer membrane of the cell. The sequence is that of Lipid-A-disaccharide synthase from Rhodopseudomonas palustris (strain ATCC BAA-98 / CGA009).